A 485-amino-acid chain; its full sequence is Delta(14)-sterol reductase (485 aa).

The next 5 membrane-spanning stretches (helical) occupy residues 18-38 (FFGP…VYVF), 77-97 (GLVS…SLIL), 131-151 (LAIL…WTFI), 155-175 (FIQI…FVYV), and 319-339 (SLGP…FYIF). Residues K346, R350, L373, W378, and 385–386 (NY) contribute to the NADP(+) site. A helical membrane pass occupies residues 431-451 (AKGWGMLITYFYILYFAILLI). NADP(+) is bound by residues D457, 461–465 (CHRKY), and Y472.

It belongs to the ERG4/ERG24 family.

The protein localises to the membrane. It catalyses the reaction 4,4-dimethyl-5alpha-cholesta-8,24-dien-3beta-ol + NADP(+) = 4,4-dimethyl-5alpha-cholesta-8,14,24-trien-3beta-ol + NADPH + H(+). The protein operates within steroid biosynthesis; zymosterol biosynthesis; zymosterol from lanosterol: step 2/6. Reduces the C14=C15 double bond of 4,4-dimethyl-cholesta-8,14,24-trienol to produce 4,4-dimethyl-cholesta-8,24-dienol. This is Delta(14)-sterol reductase from Fusarium vanettenii (Neocosmospora pisi).